The chain runs to 227 residues: Cytochrome c oxidase subunit 2 (227 aa).

The Mitochondrial intermembrane segment spans residues 1–14 (MAYPLQLGFQDATS). The chain crosses the membrane as a helical span at residues 15-45 (PVMEELLHFHDHTLMIIFLISSLVLYIIMLM). At 46–59 (LTTKLVHTNMMNVQ) the chain is on the mitochondrial matrix side. The chain crosses the membrane as a helical span at residues 60 to 87 (EMEMIWTILPAIILILIALPSLHTLYMM). Residues 88–227 (DEINNPLLTI…YFESWSASLA (140 aa)) are Mitochondrial intermembrane-facing. Positions 161, 196, 198, 200, 204, and 207 each coordinate Cu cation. Residue Glu-198 coordinates Mg(2+). Residue Tyr-218 is modified to Phosphotyrosine.

Belongs to the cytochrome c oxidase subunit 2 family. As to quaternary structure, component of the cytochrome c oxidase (complex IV, CIV), a multisubunit enzyme composed of 14 subunits. The complex is composed of a catalytic core of 3 subunits MT-CO1, MT-CO2 and MT-CO3, encoded in the mitochondrial DNA, and 11 supernumerary subunits COX4I, COX5A, COX5B, COX6A, COX6B, COX6C, COX7A, COX7B, COX7C, COX8 and NDUFA4, which are encoded in the nuclear genome. The complex exists as a monomer or a dimer and forms supercomplexes (SCs) in the inner mitochondrial membrane with NADH-ubiquinone oxidoreductase (complex I, CI) and ubiquinol-cytochrome c oxidoreductase (cytochrome b-c1 complex, complex III, CIII), resulting in different assemblies (supercomplex SCI(1)III(2)IV(1) and megacomplex MCI(2)III(2)IV(2)). Found in a complex with TMEM177, COA6, COX18, COX20, SCO1 and SCO2. Interacts with TMEM177 in a COX20-dependent manner. Interacts with COX20. Interacts with COX16. The cofactor is Cu cation.

It is found in the mitochondrion inner membrane. The catalysed reaction is 4 Fe(II)-[cytochrome c] + O2 + 8 H(+)(in) = 4 Fe(III)-[cytochrome c] + 2 H2O + 4 H(+)(out). Its function is as follows. Component of the cytochrome c oxidase, the last enzyme in the mitochondrial electron transport chain which drives oxidative phosphorylation. The respiratory chain contains 3 multisubunit complexes succinate dehydrogenase (complex II, CII), ubiquinol-cytochrome c oxidoreductase (cytochrome b-c1 complex, complex III, CIII) and cytochrome c oxidase (complex IV, CIV), that cooperate to transfer electrons derived from NADH and succinate to molecular oxygen, creating an electrochemical gradient over the inner membrane that drives transmembrane transport and the ATP synthase. Cytochrome c oxidase is the component of the respiratory chain that catalyzes the reduction of oxygen to water. Electrons originating from reduced cytochrome c in the intermembrane space (IMS) are transferred via the dinuclear copper A center (CU(A)) of subunit 2 and heme A of subunit 1 to the active site in subunit 1, a binuclear center (BNC) formed by heme A3 and copper B (CU(B)). The BNC reduces molecular oxygen to 2 water molecules using 4 electrons from cytochrome c in the IMS and 4 protons from the mitochondrial matrix. In Mammuthus primigenius (Siberian woolly mammoth), this protein is Cytochrome c oxidase subunit 2 (MT-CO2).